A 394-amino-acid chain; its full sequence is Obg-like ATPase 1 (394 aa).

The OBG-type G domain occupies 25 to 282 (LKIGIVGLPN…MAPDEAAKYC (258 aa)). ATP is bound by residues 34 to 39 (NVGKST), 56 to 60 (FCTIE), and 94 to 97 (DIAG). Residues S38 and T58 each contribute to the Mg(2+) site. F129 is a GTP binding site. Residues 230–231 (NL), L231, and 263–265 (SGV) contribute to the ATP site. Position 263–265 (263–265 (SGV)) interacts with GTP. Residues 303–386 (NLIYFFTAGP…QDGDIIFFKF (84 aa)) enclose the TGS domain.

This sequence belongs to the TRAFAC class OBG-HflX-like GTPase superfamily. OBG GTPase family. YchF/OLA1 subfamily. In terms of assembly, monomer (Potential). Interacts with CAR4/GAP1. Mg(2+) serves as cofactor.

The protein resides in the cytoplasm. It is found in the cytosol. With respect to regulation, activated by GAP1. In terms of biological role, hydrolyzes ATP, and can also hydrolyze GTP with lower efficiency. Has lower affinity for GTP (Potential). Exhibits GTPase activity. Confers sensitivity to salinity stress by suppressing the anti-oxidation enzymatic activities and increasing lipid peroxidation thus leading to the accumulation of reactive oxygen species (ROS). Acts as a negative regulator of disease resistance against bacterial pathogen. The polypeptide is Obg-like ATPase 1 (Arabidopsis thaliana (Mouse-ear cress)).